A 425-amino-acid chain; its full sequence is Ribonuclease T2-like (425 aa).

Positions 1–18 are cleaved as a signal peptide; sequence MLLNKGLLASLLAYTTTA. Cystine bridges form between cysteine 32/cysteine 51, cysteine 40/cysteine 99, cysteine 50/cysteine 175, cysteine 107/cysteine 167, and cysteine 245/cysteine 281. A glycan (N-linked (GlcNAc...) asparagine) is linked at asparagine 42. Residue histidine 92 is part of the active site. N-linked (GlcNAc...) asparagine glycosylation is present at asparagine 134. Active-site residues include glutamate 160 and histidine 164.

It belongs to the RNase T2 family.

It is found in the vacuole lumen. It localises to the cytoplasm. It catalyses the reaction a ribonucleotidyl-ribonucleotide-RNA + H2O = a 3'-end 3'-phospho-ribonucleotide-RNA + a 5'-end dephospho-ribonucleoside-RNA + H(+). Rnase which modulates cell survival under stress conditions. Released from the vacuole to the cytoplasm during stress to promote tRNA and rRNA cleavage and to activate separately a downstream pathway that promotes cell death. Involved in cell size, vacuolar morphology and growth at high temperatures and high salt concentration. The protein is Ribonuclease T2-like (RNY1) of Kluyveromyces lactis (strain ATCC 8585 / CBS 2359 / DSM 70799 / NBRC 1267 / NRRL Y-1140 / WM37) (Yeast).